Consider the following 262-residue polypeptide: Putative ankyrin repeat protein FPV243 (262 aa).

The stretch at 25 to 54 (YGSTPLFEAICNCSCKNVKLFLENNADINE) is one ANK repeat.

This chain is Putative ankyrin repeat protein FPV243, found in Vertebrata (FPV).